The primary structure comprises 156 residues: Small ribosomal subunit protein uS7 (156 aa).

Belongs to the universal ribosomal protein uS7 family. Part of the 30S ribosomal subunit. Contacts proteins S9 and S11.

In terms of biological role, one of the primary rRNA binding proteins, it binds directly to 16S rRNA where it nucleates assembly of the head domain of the 30S subunit. Is located at the subunit interface close to the decoding center, probably blocks exit of the E-site tRNA. The protein is Small ribosomal subunit protein uS7 of Thiomonas delicata (Thiomonas cuprina).